Reading from the N-terminus, the 232-residue chain is Cytidylate kinase (232 aa).

11-19 is an ATP binding site; the sequence is GPAGAGKST.

It belongs to the cytidylate kinase family. Type 1 subfamily.

It localises to the cytoplasm. It carries out the reaction CMP + ATP = CDP + ADP. It catalyses the reaction dCMP + ATP = dCDP + ADP. The polypeptide is Cytidylate kinase (Roseiflexus castenholzii (strain DSM 13941 / HLO8)).